The chain runs to 138 residues: UPF0310 protein MAV_1800 (138 aa).

Belongs to the UPF0310 family.

The polypeptide is UPF0310 protein MAV_1800 (Mycobacterium avium (strain 104)).